The sequence spans 665 residues: Methionine--tRNA ligase (665 aa).

The 'HIGH' region motif lies at 12–22; it reads YYPSGKLHIGS. The 'KMSKS' region signature appears at 308-312; the sequence is KMSKS. Lys311 provides a ligand contact to ATP. The region spanning 562–665 is the tRNA-binding domain; sequence TFDAVEIRVA…SSVPNGSIIG (104 aa).

The protein belongs to the class-I aminoacyl-tRNA synthetase family. MetG type 2B subfamily. As to quaternary structure, homodimer.

The protein resides in the cytoplasm. The catalysed reaction is tRNA(Met) + L-methionine + ATP = L-methionyl-tRNA(Met) + AMP + diphosphate. Is required not only for elongation of protein synthesis but also for the initiation of all mRNA translation through initiator tRNA(fMet) aminoacylation. The polypeptide is Methionine--tRNA ligase (metG) (Streptococcus pyogenes serotype M3 (strain SSI-1)).